A 475-amino-acid polypeptide reads, in one-letter code: Arginine/ornithine antiporter (475 aa).

12 consecutive transmembrane segments (helical) span residues 10-30 (IGLLALIALVISSSIGSGVFG), 42-62 (GPVLIAWVIVGFGILMLALSL), 74-94 (GIFSYAEKGFGPFAGFISGWG), 101-121 (LGNVTFATILMSALGYFFPIF), 157-177 (LVTICKLIPLFVFIIFGIVLF), 205-225 (NCMMVMMWVFVGIEGASMLSA), 238-258 (ILGLVSLLAIYILASVLPYGY), 283-303 (WGGYFIGVGLIISILGAWLSW), 333-353 (PTFALVVTAGLIQVFLFTLLF), 361-381 (AYSLCTASIIVCYMLVAAYQI), 397-417 (LLIGVLALLFEIAGILMAGVS), and 451-471 (WLITTIIVIGAIIGIWLVVSG).

It belongs to the amino acid-polyamine-organocation (APC) superfamily. Basic amino acid/polyamine antiporter (APA) (TC 2.A.3.2) family.

The protein resides in the cell membrane. It catalyses the reaction L-ornithine(in) + L-arginine(out) = L-ornithine(out) + L-arginine(in). Catalyzes electroneutral exchange between L-arginine and L-ornithine. This chain is Arginine/ornithine antiporter (arcD), found in Latilactobacillus sakei (Lactobacillus sakei).